Here is a 255-residue protein sequence, read N- to C-terminus: MKVLATSFVLGSLGLAFYLPLVVTTPKTLAIPEKLQEAVGKVIINATTCTVTCGLGYKEETVCEVGPDGVRRKCQTRRLECLTNWICGMLHFTILIGKEFELSCLSSDILEFGQEAFRFTWRLARGVISTDDEVFKPFQANSHFVKFKYAQEYDSGTYRCDVQLVKNLRLVKRLYFGLRVLPPNLVNLNFHQSLTEDQKLIDEGLEVNLDSYSKPHHPKWKKKVASALGIGIAIGVVGGVLVRIVLCALRGGLQQ.

Residues 1–30 form the signal peptide; the sequence is MKVLATSFVLGSLGLAFYLPLVVTTPKTLA. Over 31–226 the chain is Extracellular; it reads IPEKLQEAVG…HPKWKKKVAS (196 aa). Residue N45 is glycosylated (N-linked (GlcNAc...) asparagine). Residues 83-171 enclose the Ig-like domain; the sequence is TNWICGMLHF…VQLVKNLRLV (89 aa). A disulfide bridge links C104 with C160. Residues 227–247 form a helical membrane-spanning segment; that stretch reads ALGIGIAIGVVGGVLVRIVLC. Over 248–255 the chain is Cytoplasmic; that stretch reads ALRGGLQQ.

Forms a complex with IZUMO1 and SPACA6 on spermatocyte cell membrane required for fertilization. As to expression, highly expressed in sperm (at protein level).

The protein resides in the cell membrane. Its function is as follows. Essential fertilization factor required for male fertility. Part of a conserved trimeric sperm complex with the essential fertilization factors IZUMO1 and SPACA6 which bridges sperm and oocyte membranes during fertilization by binding to IZUMO1R/JUNO on the oocyte. The polypeptide is Transmembrane protein 81 (Homo sapiens (Human)).